Consider the following 395-residue polypeptide: L-rhamnonate dehydratase (395 aa).

Substrate contacts are provided by His23 and Arg49. Residues Asp215, Glu241, and Glu269 each coordinate Mg(2+). Residue His319 is the Proton acceptor of the active site. Glu339 serves as a coordination point for substrate.

Belongs to the mandelate racemase/muconate lactonizing enzyme family. RhamD subfamily. In terms of assembly, homooctamer; tetramer of dimers. Mg(2+) is required as a cofactor.

It catalyses the reaction L-rhamnonate = 2-dehydro-3-deoxy-L-rhamnonate + H2O. Functionally, catalyzes the dehydration of L-rhamnonate to 2-keto-3-deoxy-L-rhamnonate (KDR). The polypeptide is L-rhamnonate dehydratase (rhmD) (Polaromonas sp. (strain JS666 / ATCC BAA-500)).